Consider the following 564-residue polypeptide: MTEHHNSDPRLDTTREIRAPHGTTLRAKSWLTEAPLRMLMNNLDPDVAEHPHALVVYGGIGRAARDWKCYDKIVEVLERLEDDQTLLVQSGKPVGVFPTHKNAPRVLIANSNLVPHWANWEHFNELDKEGLMMYGQMTAGSWIYIGSQGIVQGTYETFVAIAKKHFQGEANGKWVLTGGLGGMGGAQPLAATMAGFSMIAVECDESRIDYRLRTGYVDRKATSIDEAMAMIKESDTPISVGLLGNAADVFPELVERNITPDVVTDQTSAHDPLNGYLPQGWTMEKAAQERTIDEAKVVKAAKQSMAIQVQAMLDLQYRGAATVDYGNNIRQMALEEGVENAFDFPGFVPAYIRPLFCEGVGPFRWAALSGDPEDIYKTDQKVKELIPDNPHLHNWLDMARERIQFQGLPARICWVGLKDRERLGQAFNEMVKNGELKAPVVIGRDHLDSGSVASPNRETEGMMDGSDAVSDWPLLNALLNTAGGATWVSLHHGGGVGMGFSQHSGMVICCDGSEDASQRISRVLHNDPATGVMRHADAGYDIAKQCAKEQKLDLPMLNEELRRL.

Residues 58-59, Q136, 182-184, E202, R207, 245-246, 266-270, 276-277, and Y325 contribute to the NAD(+) site; these read GG, GMG, NA, QTSAH, and YL. Residue C413 is part of the active site. G495 contributes to the NAD(+) binding site.

It belongs to the urocanase family. The cofactor is NAD(+).

It is found in the cytoplasm. It carries out the reaction 4-imidazolone-5-propanoate = trans-urocanate + H2O. It functions in the pathway amino-acid degradation; L-histidine degradation into L-glutamate; N-formimidoyl-L-glutamate from L-histidine: step 2/3. Catalyzes the conversion of urocanate to 4-imidazolone-5-propionate. This is Urocanate hydratase from Vibrio atlanticus (strain LGP32) (Vibrio splendidus (strain Mel32)).